Here is a 264-residue protein sequence, read N- to C-terminus: GTP cyclohydrolase FolE2 (264 aa).

Belongs to the GTP cyclohydrolase IV family.

The catalysed reaction is GTP + H2O = 7,8-dihydroneopterin 3'-triphosphate + formate + H(+). Its pathway is cofactor biosynthesis; 7,8-dihydroneopterin triphosphate biosynthesis; 7,8-dihydroneopterin triphosphate from GTP: step 1/1. In terms of biological role, converts GTP to 7,8-dihydroneopterin triphosphate. In Ruthia magnifica subsp. Calyptogena magnifica, this protein is GTP cyclohydrolase FolE2.